The primary structure comprises 52 residues: Venom peptide 4b (52 aa).

An N-terminal signal peptide occupies residues 1 to 23 (MRSAILLVIVAIVAILGFLGVNA). AXPX repeat units lie at residues 23 to 26 (AEPL), 31 to 34 (AEPN), and 39 to 42 (AAPL). The propeptide occupies 24 to 41 (EPLPSPLAEPNPHAKAAP). The tract at residues 30 to 52 (LAEPNPHAKAAPLSPAAMASLAG) is disordered. Residues 37–52 (AKAAPLSPAAMASLAG) are compositionally biased toward low complexity. Alanine 51 is subject to Alanine amide.

As to expression, expressed by the venom gland.

Its subcellular location is the secreted. This is Venom peptide 4b from Eumenes pomiformis (Potter wasp).